A 408-amino-acid polypeptide reads, in one-letter code: Phosphoenolpyruvate/phosphate translocator 1, chloroplastic (408 aa).

Residues 1-85 (MQSSAVFSLS…SLDTNRFRTA (85 aa)) constitute a chloroplast transit peptide. Alanine 86 is subject to N-acetylalanine. Transmembrane regions (helical) follow at residues 105 to 125 (VLEL…FNIY), 137 to 157 (MTVT…MWVL), 165 to 185 (ISGA…LGNL), 198 to 218 (FTHT…AMFL), 222 to 242 (PTPW…LASI), 283 to 303 (ITLF…VTFF), 324 to 346 (IYTK…YMIL), and 377 to 396 (VSPV…FLYS). Positions 124–241 (IYNKQVLKAL…PIVGGVALAS (118 aa)) constitute an EamA domain.

It belongs to the TPT transporter family. PPT (TC 2.A.7.9) subfamily. In terms of tissue distribution, expressed in root columella, lateral root cap and root vasculature tissue. In leaves, highly expressed in xylem parenchyma cells. In flowers, expressed in sepals, petals, filaments of the stamens, anthers and stigma.

Its subcellular location is the plastid. The protein resides in the chloroplast membrane. Functionally, phosphoenolpyruvate/phosphate translocator that transports phosphoenolpyruvate (PEP), 2-phosphoglycerate, 3-phosphoglycerate and dihydroxyacetone phosphate. Imports PEP to the chloroplast stroma as one substrate of the shikimate pathway, from which aromatic amino acids and a variety of secondary products derive. Required for correct leaf mesophyll cell development and expression of chlorophyll a/b binding protein 3 (CAB3). This Arabidopsis thaliana (Mouse-ear cress) protein is Phosphoenolpyruvate/phosphate translocator 1, chloroplastic (PPT1).